A 224-amino-acid polypeptide reads, in one-letter code: Stage II sporulation protein R (224 aa).

The sequence is that of Stage II sporulation protein R (spoIIR) from Bacillus subtilis (strain 168).